Reading from the N-terminus, the 240-residue chain is Ribonuclease HII (240 aa).

In terms of domain architecture, RNase H type-2 spans G27–D226. A divalent metal cation contacts are provided by D33, E34, and D127.

The protein belongs to the RNase HII family. Mn(2+) serves as cofactor. It depends on Mg(2+) as a cofactor.

It localises to the cytoplasm. The enzyme catalyses Endonucleolytic cleavage to 5'-phosphomonoester.. Its function is as follows. Endonuclease that specifically degrades the RNA of RNA-DNA hybrids. This chain is Ribonuclease HII, found in Parafrankia sp. (strain EAN1pec).